Consider the following 631-residue polypeptide: tRNA uridine 5-carboxymethylaminomethyl modification enzyme MnmG (631 aa).

15-20 (GAGHAG) is an FAD binding site. Positions 214 to 233 (YSKTEEEPGDKEPRHFSFTS) are disordered. 276–290 (GPRYCPSIETKVVRF) contributes to the NAD(+) binding site.

It belongs to the MnmG family. In terms of assembly, homodimer. Heterotetramer of two MnmE and two MnmG subunits. FAD is required as a cofactor.

It is found in the cytoplasm. In terms of biological role, NAD-binding protein involved in the addition of a carboxymethylaminomethyl (cmnm) group at the wobble position (U34) of certain tRNAs, forming tRNA-cmnm(5)s(2)U34. In Lactobacillus delbrueckii subsp. bulgaricus (strain ATCC BAA-365 / Lb-18), this protein is tRNA uridine 5-carboxymethylaminomethyl modification enzyme MnmG.